A 257-amino-acid polypeptide reads, in one-letter code: Protein YIPF5 (257 aa).

Residues 1 to 124 lie on the Cytoplasmic side of the membrane; sequence MSGFENLNTD…KVADGSIMNE (124 aa). Positions 75–106 are interaction with Sec23; sequence PASPQPFYGNSFEDEPPLLEELGINFDHIWQK. Residues 125–145 form a helical membrane-spanning segment; it reads TDLAGPMVFCLAFGATLLLAG. Residue Lys146 is a topological domain, lumenal. The helical transmembrane segment at 147–167 threads the bilayer; the sequence is IQFGYVYGISAIGCLGMFCLL. Topologically, residues 168–173 are cytoplasmic; it reads NLMSMT. The helical transmembrane segment at 174-194 threads the bilayer; that stretch reads GVSFGCVASVLGYCLLPMILL. Topologically, residues 195 to 196 are lumenal; that stretch reads SS. Residues 197 to 217 traverse the membrane as a helical segment; sequence FAVIFSLQGMVGIILTAGIIG. Residues 218–236 lie on the Cytoplasmic side of the membrane; it reads WCSFSASKIFISALAMEGQ. A helical membrane pass occupies residues 237 to 257; the sequence is QLLVAYPCALLYGVFALISVF.

The protein belongs to the YIP1 family. In terms of assembly, interacts with the COPII coat components Sec23 (SEC23A and/or SEC23B) and Sec24 (SEC24A and/or SEC24B). Interacts with YIF1A. May interact with RAB1A. Interacts with YIPF3 and YIPF4.

It is found in the endoplasmic reticulum membrane. The protein resides in the golgi apparatus. The protein localises to the cis-Golgi network membrane. Its subcellular location is the cytoplasmic vesicle. It localises to the COPII-coated vesicle. Functionally, plays a role in transport between endoplasmic reticulum and Golgi. In pancreatic beta cells, required to transport proinsulin from endoplasmic reticulum into the Golgi. The chain is Protein YIPF5 (YIPF5) from Macaca fascicularis (Crab-eating macaque).